We begin with the raw amino-acid sequence, 321 residues long: MTRRAILKGTGSALPRTRVSNAELAERVDTSDEWIVERTGIRFRHIAEPDETTATLGADAARRALEAAGLQPADIGLIIVATATPDNTFPASATKVQALLGAPDCIAFDVAAVCSGFLYAVSVADAMLRTGAARHALVIGSETFSRILDWNDRTTCVLFGDGAGAVVLSAEDVADDRGVLATRLHAEGRYCDMLYVDGGPSTTGTVGHVRMQGREVFRHAVTNLAAVLGEVMRDVGLSADDIDWVVPHQANKRIIDATAKKLGLPADRVVLTVDQHANTSAASVPLALDLAVRDGRIKRGDLVVLEAMGGGFTWGAAVLRV.

Active-site residues include Cys114 and His248. Residues 249–253 form an ACP-binding region; that stretch reads QANKR. Asn278 is a catalytic residue.

This sequence belongs to the thiolase-like superfamily. FabH family. In terms of assembly, homodimer.

Its subcellular location is the cytoplasm. It catalyses the reaction malonyl-[ACP] + acetyl-CoA + H(+) = 3-oxobutanoyl-[ACP] + CO2 + CoA. The protein operates within lipid metabolism; fatty acid biosynthesis. Its function is as follows. Catalyzes the condensation reaction of fatty acid synthesis by the addition to an acyl acceptor of two carbons from malonyl-ACP. Catalyzes the first condensation reaction which initiates fatty acid synthesis and may therefore play a role in governing the total rate of fatty acid production. Possesses both acetoacetyl-ACP synthase and acetyl transacylase activities. Its substrate specificity determines the biosynthesis of branched-chain and/or straight-chain of fatty acids. The polypeptide is Beta-ketoacyl-[acyl-carrier-protein] synthase III (Sphingopyxis alaskensis (strain DSM 13593 / LMG 18877 / RB2256) (Sphingomonas alaskensis)).